A 210-amino-acid polypeptide reads, in one-letter code: Ribonuclease HII (210 aa).

Residues 18-208 (YPVAGIDEAG…VNDIISQTKL (191 aa)) enclose the RNase H type-2 domain. 3 residues coordinate a divalent metal cation: D24, E25, and D116.

Belongs to the RNase HII family. Mn(2+) is required as a cofactor. Requires Mg(2+) as cofactor.

The protein resides in the cytoplasm. It carries out the reaction Endonucleolytic cleavage to 5'-phosphomonoester.. Its function is as follows. Endonuclease that specifically degrades the RNA of RNA-DNA hybrids. This Endomicrobium trichonymphae protein is Ribonuclease HII.